A 393-amino-acid polypeptide reads, in one-letter code: MTTSVIVTGARTPIGKLMGSLKDFSASDLGAITIAAALKKANVAPSIVQYVIIGQVLTAGAGQMPARQAAVAAGIGWDVPALTINKMCLSGLDAIALADQLIRAGEFDVVVAGGQESMTKAPHLLMDSRSGYKYGDVTIVDHLAYDGLHDVFTNQPMGALTEQRNDVEKFTRQEQDEFAARSHQKAAAAWKDGVFADEVVPVSIPQSKGDSLQFTEDEGIRANTSAESLAGLKPAFRCGGTITPGSASQISDGAATVVVMNKEKAQQLGLTWLVEIGAHGVVAGPDSTLQSQPANAIKKAVDREGISVEQLDVVEINEAFAAVALASARELGIAPELVNVNGGAIAVGHPLGMSGARITLHVALELARRGSGYGVAALCGAGGQGDALILRAV.

Residue Cys88 is the Acyl-thioester intermediate of the active site. Residues His349 and Cys379 each act as proton acceptor in the active site.

Belongs to the thiolase-like superfamily. Thiolase family.

The catalysed reaction is 2 acetyl-CoA = acetoacetyl-CoA + CoA. The polypeptide is Probable acetyl-CoA acetyltransferase (fadA4) (Mycobacterium leprae (strain TN)).